The following is a 600-amino-acid chain: Aspartate--tRNA(Asp/Asn) ligase (600 aa).

Position 187 (Glu-187) interacts with L-aspartate. Residues 211 to 214 are aspartate; the sequence is QIFK. The L-aspartate site is built by Arg-233 and His-463. 233-235 lines the ATP pocket; sequence RDE. Glu-497 provides a ligand contact to ATP. Arg-504 contacts L-aspartate. Residue 549 to 552 participates in ATP binding; it reads GVDR.

This sequence belongs to the class-II aminoacyl-tRNA synthetase family. Type 1 subfamily. In terms of assembly, homodimer.

Its subcellular location is the cytoplasm. It catalyses the reaction tRNA(Asx) + L-aspartate + ATP = L-aspartyl-tRNA(Asx) + AMP + diphosphate. Aspartyl-tRNA synthetase with relaxed tRNA specificity since it is able to aspartylate not only its cognate tRNA(Asp) but also tRNA(Asn). Reaction proceeds in two steps: L-aspartate is first activated by ATP to form Asp-AMP and then transferred to the acceptor end of tRNA(Asp/Asn). This is Aspartate--tRNA(Asp/Asn) ligase from Wolbachia pipientis subsp. Culex pipiens (strain wPip).